We begin with the raw amino-acid sequence, 417 residues long: NADH-quinone oxidoreductase subunit D (417 aa).

The protein belongs to the complex I 49 kDa subunit family. NDH-1 is composed of 14 different subunits. Subunits NuoB, C, D, E, F, and G constitute the peripheral sector of the complex.

It localises to the cell inner membrane. The enzyme catalyses a quinone + NADH + 5 H(+)(in) = a quinol + NAD(+) + 4 H(+)(out). NDH-1 shuttles electrons from NADH, via FMN and iron-sulfur (Fe-S) centers, to quinones in the respiratory chain. The immediate electron acceptor for the enzyme in this species is believed to be ubiquinone. Couples the redox reaction to proton translocation (for every two electrons transferred, four hydrogen ions are translocated across the cytoplasmic membrane), and thus conserves the redox energy in a proton gradient. The protein is NADH-quinone oxidoreductase subunit D of Cupriavidus necator (strain ATCC 17699 / DSM 428 / KCTC 22496 / NCIMB 10442 / H16 / Stanier 337) (Ralstonia eutropha).